The chain runs to 467 residues: GTPase Der (467 aa).

EngA-type G domains are found at residues Pro-3 to Glu-167 and Pro-179 to Arg-352. Residues Gly-9 to Ser-16, Asp-56 to Phe-60, Asn-119 to Glu-122, Gly-185 to Ser-192, Asp-232 to Leu-236, and Asn-297 to Asp-300 contribute to the GTP site. One can recognise a KH-like domain in the interval Ala-353–His-437. The segment at Arg-434–Gly-467 is disordered. Residues Ala-455–Gly-467 are compositionally biased toward basic residues.

Belongs to the TRAFAC class TrmE-Era-EngA-EngB-Septin-like GTPase superfamily. EngA (Der) GTPase family. Associates with the 50S ribosomal subunit.

GTPase that plays an essential role in the late steps of ribosome biogenesis. The sequence is that of GTPase Der from Nitrosomonas europaea (strain ATCC 19718 / CIP 103999 / KCTC 2705 / NBRC 14298).